Here is a 293-residue protein sequence, read N- to C-terminus: Pyridoxal 5'-phosphate synthase subunit PdxS (293 aa).

D23 contributes to the D-ribose 5-phosphate binding site. K80 serves as the catalytic Schiff-base intermediate with D-ribose 5-phosphate. G152 serves as a coordination point for D-ribose 5-phosphate. D-glyceraldehyde 3-phosphate is bound at residue R164. Residues G213 and 234–235 each bind D-ribose 5-phosphate; that span reads GS.

It belongs to the PdxS/SNZ family. In the presence of PdxT, forms a dodecamer of heterodimers.

It carries out the reaction aldehydo-D-ribose 5-phosphate + D-glyceraldehyde 3-phosphate + L-glutamine = pyridoxal 5'-phosphate + L-glutamate + phosphate + 3 H2O + H(+). Its pathway is cofactor biosynthesis; pyridoxal 5'-phosphate biosynthesis. Its function is as follows. Catalyzes the formation of pyridoxal 5'-phosphate from ribose 5-phosphate (RBP), glyceraldehyde 3-phosphate (G3P) and ammonia. The ammonia is provided by the PdxT subunit. Can also use ribulose 5-phosphate and dihydroxyacetone phosphate as substrates, resulting from enzyme-catalyzed isomerization of RBP and G3P, respectively. This Syntrophus aciditrophicus (strain SB) protein is Pyridoxal 5'-phosphate synthase subunit PdxS.